The following is a 122-amino-acid chain: Large ribosomal subunit protein uL14c (122 aa).

The protein belongs to the universal ribosomal protein uL14 family. As to quaternary structure, part of the 50S ribosomal subunit.

Its subcellular location is the plastid. It is found in the chloroplast. In terms of biological role, binds to 23S rRNA. The chain is Large ribosomal subunit protein uL14c (rpl14) from Bigelowiella natans (Pedinomonas minutissima).